The sequence spans 217 residues: MOB kinase activator 3A (217 aa).

Cysteine 83, cysteine 88, histidine 165, and histidine 170 together coordinate Zn(2+).

It belongs to the MOB1/phocein family.

Its function is as follows. May regulate the activity of kinases. The chain is MOB kinase activator 3A (MOB3A) from Homo sapiens (Human).